Here is a 192-residue protein sequence, read N- to C-terminus: UPF0149 protein KPN78578_32810 (192 aa).

This sequence belongs to the UPF0149 family.

The sequence is that of UPF0149 protein KPN78578_32810 from Klebsiella pneumoniae subsp. pneumoniae (strain ATCC 700721 / MGH 78578).